The following is a 292-amino-acid chain: GTP cyclohydrolase FolE2 (292 aa).

Belongs to the GTP cyclohydrolase IV family.

It carries out the reaction GTP + H2O = 7,8-dihydroneopterin 3'-triphosphate + formate + H(+). The protein operates within cofactor biosynthesis; 7,8-dihydroneopterin triphosphate biosynthesis; 7,8-dihydroneopterin triphosphate from GTP: step 1/1. In terms of biological role, converts GTP to 7,8-dihydroneopterin triphosphate. The polypeptide is GTP cyclohydrolase FolE2 (Staphylococcus aureus (strain MRSA252)).